The sequence spans 89 residues: Small ribosomal subunit protein uS14A (89 aa).

This sequence belongs to the universal ribosomal protein uS14 family. Part of the 30S ribosomal subunit. Contacts proteins S3 and S10.

Its function is as follows. Binds 16S rRNA, required for the assembly of 30S particles and may also be responsible for determining the conformation of the 16S rRNA at the A site. The protein is Small ribosomal subunit protein uS14A of Ligilactobacillus salivarius (strain UCC118) (Lactobacillus salivarius).